A 257-amino-acid chain; its full sequence is MSKTAIITGAAGGLGKGIAERLANDGFNIVLQDINEALLLETEKEFKEKGYQAVAYKSDVSKKKEQEELVQFAVTEFGQLDVMVNNAGVDAVTPILEIGEEELSKLFNINVFGTLFGIQAAANQFIKQKSKGKIINACSIAGHESYEVLGTYSATKHSVRSFTQTAAKELADKGITVNAYCPGVAKTEMWDRIDEEMVKLDDSLEIGDAFEAFSSEIKLGRYQEPSDVANLVSFLASNDSDYITGQSILTDGGLVYR.

NAD(+) is bound at residue 6-30; the sequence is IITGAAGGLGKGIAERLANDGFNIV. Ser139 is a binding site for substrate. The Proton acceptor role is filled by Tyr152. Residue Lys156 is part of the active site.

Belongs to the short-chain dehydrogenases/reductases (SDR) family.

It catalyses the reaction (S)-acetoin + NAD(+) = diacetyl + NADH + H(+). Catalyzes the irreversible reduction of 2,3-butanediol to (S)-acetoin in the presence of NADH. In Staphylococcus epidermidis (strain ATCC 12228 / FDA PCI 1200), this protein is Diacetyl reductase [(S)-acetoin forming] (butA).